The sequence spans 331 residues: Glucokinase (331 aa).

Position 16-21 (16-21 (GDIGGT)) interacts with ATP.

It belongs to the bacterial glucokinase family.

The protein resides in the cytoplasm. The enzyme catalyses D-glucose + ATP = D-glucose 6-phosphate + ADP + H(+). The polypeptide is Glucokinase (Pseudomonas aeruginosa (strain LESB58)).